The chain runs to 96 residues: LLVPLVTFHLILGMGTLDHGGALTERRSADATALKPEPVLLQKSDARSTDDNDKDRLTQMKRILKKRGNKARGEEEHSKYQECLREIRVNNVQQEC.

The signal sequence occupies residues 1-24 (LLVPLVTFHLILGMGTLDHGGALT). The propeptide occupies 25-72 (ERRSADATALKPEPVLLQKSDARSTDDNDKDRLTQMKRILKKRGNKAR). Positions 28 to 57 (SADATALKPEPVLLQKSDARSTDDNDKDRL) are disordered. Basic and acidic residues predominate over residues 44–57 (SDARSTDDNDKDRL). A 4-carboxyglutamate mark is found at Glu75, Glu76, Glu82, Glu86, and Glu95. A divalent metal cation contacts are provided by Glu82 and Glu86. Cys83 and Cys96 are oxidised to a cystine.

This sequence belongs to the conotoxin B superfamily. Expressed by the venom duct.

It is found in the secreted. Its function is as follows. Conantokins inhibit N-methyl-D-aspartate (NMDA) receptors. This toxin has the highest potency for the NR2B/GRIN2B subunit, followed by NR2A/GRIN2A, NR2C/GRIN2C, and NR2D/GRIN2D subunits. This Conus ermineus (Agate cone) protein is Conantokin-E.